A 221-amino-acid polypeptide reads, in one-letter code: Octanoyltransferase (221 aa).

The BPL/LPL catalytic domain maps to 31–216; that stretch reads GQIGDTLLLL…SLCAIFDLRP (186 aa). Residues 76–83, 145–147, and 159–161 each bind substrate; these read RGGEVTYH, AIG, and GLA. The active-site Acyl-thioester intermediate is C177.

It belongs to the LipB family.

It is found in the cytoplasm. The enzyme catalyses octanoyl-[ACP] + L-lysyl-[protein] = N(6)-octanoyl-L-lysyl-[protein] + holo-[ACP] + H(+). It functions in the pathway protein modification; protein lipoylation via endogenous pathway; protein N(6)-(lipoyl)lysine from octanoyl-[acyl-carrier-protein]: step 1/2. Its function is as follows. Catalyzes the transfer of endogenously produced octanoic acid from octanoyl-acyl-carrier-protein onto the lipoyl domains of lipoate-dependent enzymes. Lipoyl-ACP can also act as a substrate although octanoyl-ACP is likely to be the physiological substrate. The chain is Octanoyltransferase from Chloroflexus aggregans (strain MD-66 / DSM 9485).